A 448-amino-acid polypeptide reads, in one-letter code: Glucose-6-phosphate isomerase (448 aa).

Residue Glu290 is the Proton donor of the active site. Active-site residues include His311 and Lys425.

The protein belongs to the GPI family.

It localises to the cytoplasm. It catalyses the reaction alpha-D-glucose 6-phosphate = beta-D-fructose 6-phosphate. Its pathway is carbohydrate biosynthesis; gluconeogenesis. It functions in the pathway carbohydrate degradation; glycolysis; D-glyceraldehyde 3-phosphate and glycerone phosphate from D-glucose: step 2/4. In terms of biological role, catalyzes the reversible isomerization of glucose-6-phosphate to fructose-6-phosphate. This is Glucose-6-phosphate isomerase from Latilactobacillus sakei subsp. sakei (strain 23K) (Lactobacillus sakei subsp. sakei).